The following is a 128-amino-acid chain: Small ribosomal subunit protein eS8 (128 aa).

Residues 1-41 (MSYYQGNDSRKITGGQKGKNRDKRKYELGSPPTETKISDKD) are disordered.

It belongs to the eukaryotic ribosomal protein eS8 family. As to quaternary structure, part of the 30S ribosomal subunit.

The polypeptide is Small ribosomal subunit protein eS8 (Sulfolobus acidocaldarius (strain ATCC 33909 / DSM 639 / JCM 8929 / NBRC 15157 / NCIMB 11770)).